A 217-amino-acid chain; its full sequence is Probable D-methionine transport system permease protein MetI (217 aa).

The ABC transmembrane type-1 domain occupies 13–207 (TLETLYMGFI…LIVMLSQKLG (195 aa)). Transmembrane regions (helical) follow at residues 20 to 40 (GFIA…LAFL), 58 to 78 (VIIN…LLPF), 81 to 101 (LVVG…VSAI), 143 to 163 (IPIL…YSAM), and 184 to 204 (NMIY…MLSQ).

The protein belongs to the binding-protein-dependent transport system permease family. CysTW subfamily.

It is found in the cell inner membrane. Functionally, part of the binding-protein-dependent transport system for D-methionine. Probably responsible for the translocation of the substrate across the membrane. The protein is Probable D-methionine transport system permease protein MetI (metI) of Pasteurella multocida (strain Pm70).